Here is a 421-residue protein sequence, read N- to C-terminus: Acetate kinase (421 aa).

Asn-7 serves as a coordination point for Mg(2+). Residue Lys-14 coordinates ATP. Arg-91 contacts substrate. The active-site Proton donor/acceptor is Asp-148. Residues 208–212 (HIGNG) and 283–285 (DRR) each bind ATP. Glu-387 serves as a coordination point for Mg(2+).

The protein belongs to the acetokinase family. Homodimer. Requires Mg(2+) as cofactor. The cofactor is Mn(2+).

It localises to the cytoplasm. It catalyses the reaction acetate + ATP = acetyl phosphate + ADP. Its pathway is metabolic intermediate biosynthesis; acetyl-CoA biosynthesis; acetyl-CoA from acetate: step 1/2. In terms of biological role, catalyzes the formation of acetyl phosphate from acetate and ATP. Can also catalyze the reverse reaction. The chain is Acetate kinase from Geobacter metallireducens (strain ATCC 53774 / DSM 7210 / GS-15).